The primary structure comprises 323 residues: Probable oxidoreductase patJ (323 aa).

The disordered stretch occupies residues 291 to 323 (DQSANGVNGHATGVEAKKKQLGDMTRRRSGAQE). A compositionally biased stretch (basic and acidic residues) spans 305 to 316 (EAKKKQLGDMTR).

The protein belongs to the oxidoreductase OpS7 family.

The protein localises to the vacuole lumen. The protein resides in the cytoplasmic vesicle lumen. It participates in mycotoxin biosynthesis; patulin biosynthesis. Its function is as follows. Probable oxidoreductase; part of the gene cluster that mediates the biosynthesis of patulin, an acetate-derived tetraketide mycotoxin produced by several fungal species that shows antimicrobial properties against several bacteria. PatJ acts with patO in the vacuole to convert gentisyl alcohol to isoepoxydon. The pathway begins with the synthesis of 6-methylsalicylic acid by the polyketide synthase (PKS) patK via condensation of acetate and malonate units. The 6-methylsalicylic acid decarboxylase patG then catalyzes the decarboxylation of 6-methylsalicylic acid to yield m-cresol (also known as 3-methylphenol). These first reactions occur in the cytosol. The intermediate m-cresol is then transported into the endoplasmic reticulum where the cytochrome P450 monooxygenase patH converts it to m-hydroxybenzyl alcohol, which is further converted to gentisyl alcohol by the cytochrome P450 monooxygenase patI. The oxidoreductases patJ and patO further convert gentisyl alcohol to isoepoxydon in the vacuole. PatN catalyzes then the transformation of isoepoxydon into phyllostine. The cluster protein patF is responsible for the conversion from phyllostine to neopatulin whereas the alcohol dehydrogenase patD converts neopatulin to E-ascladiol. The steps between isoepoxydon and E-ascladiol occur in the cytosol, and E-ascladiol is probably secreted to the extracellular space by one of the cluster-specific transporters patC or patM. Finally, the secreted patulin synthase patE catalyzes the conversion of E-ascladiol to patulin. In Aspergillus clavatus (strain ATCC 1007 / CBS 513.65 / DSM 816 / NCTC 3887 / NRRL 1 / QM 1276 / 107), this protein is Probable oxidoreductase patJ.